The sequence spans 601 residues: Elongation factor 4 (601 aa).

Residues Asn6–Arg188 enclose the tr-type G domain. Residues Asp18–Thr23 and Asn135–Asp138 each bind GTP.

It belongs to the TRAFAC class translation factor GTPase superfamily. Classic translation factor GTPase family. LepA subfamily.

It is found in the cell inner membrane. The enzyme catalyses GTP + H2O = GDP + phosphate + H(+). Required for accurate and efficient protein synthesis under certain stress conditions. May act as a fidelity factor of the translation reaction, by catalyzing a one-codon backward translocation of tRNAs on improperly translocated ribosomes. Back-translocation proceeds from a post-translocation (POST) complex to a pre-translocation (PRE) complex, thus giving elongation factor G a second chance to translocate the tRNAs correctly. Binds to ribosomes in a GTP-dependent manner. The polypeptide is Elongation factor 4 (Bartonella henselae (strain ATCC 49882 / DSM 28221 / CCUG 30454 / Houston 1) (Rochalimaea henselae)).